The chain runs to 149 residues: UPF0306 protein PM1958 (149 aa).

Belongs to the UPF0306 family.

This Pasteurella multocida (strain Pm70) protein is UPF0306 protein PM1958.